The chain runs to 143 residues: MSDPSKTNQCPPPCCPPKPCCPPKPCCPQKPPCCPKSPCCPPKSPCCPPKPCPCPPPCPCPCPATCPCPLKPPCCPQKCSCCPKKCTCCPQPPPCCAQPTCCSSENKTESDSDTSGQTLEKGSQSPQSPPGAQGNWNQKKSNK.

3 positions are modified to phosphoserine: Ser-37, Ser-44, and Ser-110. Residues 101 to 143 (CCSSENKTESDSDTSGQTLEKGSQSPQSPPGAQGNWNQKKSNK) are disordered. Positions 113–126 (DTSGQTLEKGSQSP) are enriched in polar residues. Ser-128 is modified (phosphoserine). Polar residues predominate over residues 134 to 143 (GNWNQKKSNK).

Testis. Is selectively expressed in the spermatids of seminiferous tubules.

It localises to the cytoplasm. Its subcellular location is the mitochondrion membrane. Its function is as follows. Involved in sperm motility. Its absence is associated with genetic background dependent male infertility. Infertility may be due to reduced sperm motility in the female reproductive tract and inability to penetrate the oocyte zona pellucida. This Mus musculus (Mouse) protein is Sperm mitochondrial-associated cysteine-rich protein (Smcp).